A 312-amino-acid chain; its full sequence is Urease accessory protein UreD (312 aa).

The interval 1-50 (MRPLAPDARCAPSRPGRGPWYARRPVTTPSDPPAALREPPPPARRAGKAG) is disordered.

It belongs to the UreD family. In terms of assembly, ureD, UreF and UreG form a complex that acts as a GTP-hydrolysis-dependent molecular chaperone, activating the urease apoprotein by helping to assemble the nickel containing metallocenter of UreC. The UreE protein probably delivers the nickel.

The protein resides in the cytoplasm. Its function is as follows. Required for maturation of urease via the functional incorporation of the urease nickel metallocenter. The polypeptide is Urease accessory protein UreD (Sorangium cellulosum (strain So ce56) (Polyangium cellulosum (strain So ce56))).